A 974-amino-acid chain; its full sequence is Translation initiation factor IF-2 (974 aa).

The disordered stretch occupies residues 31 to 376; the sequence is FVKSASSTVE…APAVGGVRLP (346 aa). The segment covering 52–68 has biased composition (low complexity); sequence PSAKSADSAARPAAKPG. A compositionally biased stretch (pro residues) spans 83–96; sequence GPRPGPKPAAPAPA. Low complexity predominate over residues 97 to 133; it reads APAAAAPAATPAAQAPAPAAPAASTATPAAPASNAPK. Residues 134–147 are compositionally biased toward pro residues; it reads PGRPTPAAPAPAAP. 2 stretches are compositionally biased toward low complexity: residues 148–166 and 179–191; these read AAPA…STGA and RVGN…APAE. 2 stretches are compositionally biased toward pro residues: residues 195–210 and 253–266; these read PRPA…PRPA and RPSP…PNPG. Over residues 267–277 the composition is skewed to low complexity; the sequence is AMPARSARPAP. A compositionally biased stretch (gly residues) spans 279 to 332; the sequence is GRPGRPGGAPGGRPGGGGGGYRGGGAPGAGAGAPGGGAPAGGFRGRPGGGGRPG. Positions 349 to 358 are enriched in basic residues; it reads RRGRKSKRQK. A tr-type G domain is found at 470–641; that stretch reads SRPPVVTVMG…AVLLTADAAL (172 aa). Residues 479 to 486 are G1; that stretch reads GHVDHGKT. GTP is bound at residue 479–486; sequence GHVDHGKT. Residues 504-508 are G2; that stretch reads GITQH. The G3 stretch occupies residues 529 to 532; sequence DTPG. Residues 529-533 and 583-586 contribute to the GTP site; these read DTPGH and NKID. Positions 583-586 are G4; the sequence is NKID. Residues 619-621 are G5; sequence SAK.

The protein belongs to the TRAFAC class translation factor GTPase superfamily. Classic translation factor GTPase family. IF-2 subfamily.

It localises to the cytoplasm. One of the essential components for the initiation of protein synthesis. Protects formylmethionyl-tRNA from spontaneous hydrolysis and promotes its binding to the 30S ribosomal subunits. Also involved in the hydrolysis of GTP during the formation of the 70S ribosomal complex. The protein is Translation initiation factor IF-2 of Rhodococcus opacus (strain B4).